Here is a 310-residue protein sequence, read N- to C-terminus: Tagatose-6-phosphate kinase (310 aa).

It belongs to the carbohydrate kinase PfkB family. LacC subfamily.

It catalyses the reaction D-tagatofuranose 6-phosphate + ATP = D-tagatofuranose 1,6-bisphosphate + ADP + H(+). The protein operates within carbohydrate metabolism; D-tagatose 6-phosphate degradation; D-glyceraldehyde 3-phosphate and glycerone phosphate from D-tagatose 6-phosphate: step 1/2. In Streptococcus mutans serotype c (strain ATCC 700610 / UA159), this protein is Tagatose-6-phosphate kinase.